The chain runs to 147 residues: Bis(5'-nucleosyl)-tetraphosphatase [asymmetrical] (147 aa).

A2 carries the post-translational modification N-acetylalanine. One can recognise a Nudix hydrolase domain in the interval 2–139; sequence ALRACGLIIF…EMKATLQEGH (138 aa). The short motif at 43–64 is the Nudix box element; it reads GHVDPGENDLETALRETQEETG.

The protein belongs to the Nudix hydrolase family. Requires a divalent metal cation as cofactor.

The catalysed reaction is P(1),P(4)-bis(5'-guanosyl) tetraphosphate + H2O = GMP + GTP + 2 H(+). The enzyme catalyses a 5'-end CoA-ribonucleoside in mRNA + H2O = a 5'-end phospho-adenosine-phospho-ribonucleoside in mRNA + (R)-4'-phosphopantetheine + 2 H(+). It catalyses the reaction a 5'-end FAD-phospho-ribonucleoside in mRNA + H2O = a 5'-end phospho-adenosine-phospho-ribonucleoside in mRNA + FMN + 2 H(+). In terms of biological role, catalyzes the asymmetric hydrolysis of diadenosine 5',5'''-P1,P4-tetraphosphate (Ap4A) to yield AMP and ATP. Exhibits decapping activity towards FAD-capped RNAs and dpCoA-capped RNAs in vitro. The sequence is that of Bis(5'-nucleosyl)-tetraphosphatase [asymmetrical] (Nudt2) from Rattus norvegicus (Rat).